A 503-amino-acid polypeptide reads, in one-letter code: ATP synthase subunit alpha (503 aa).

169 to 176 contributes to the ATP binding site; that stretch reads GDRGTGKT.

It belongs to the ATPase alpha/beta chains family. F-type ATPases have 2 components, CF(1) - the catalytic core - and CF(0) - the membrane proton channel. CF(1) has five subunits: alpha(3), beta(3), gamma(1), delta(1), epsilon(1). CF(0) has three main subunits: a(1), b(2) and c(9-12). The alpha and beta chains form an alternating ring which encloses part of the gamma chain. CF(1) is attached to CF(0) by a central stalk formed by the gamma and epsilon chains, while a peripheral stalk is formed by the delta and b chains.

It localises to the cell inner membrane. The catalysed reaction is ATP + H2O + 4 H(+)(in) = ADP + phosphate + 5 H(+)(out). Its function is as follows. Produces ATP from ADP in the presence of a proton gradient across the membrane. The alpha chain is a regulatory subunit. This chain is ATP synthase subunit alpha, found in Leptospira interrogans serogroup Icterohaemorrhagiae serovar copenhageni (strain Fiocruz L1-130).